The chain runs to 69 residues: Conotoxin Cal12.1p4 (69 aa).

The propeptide occupies 1–23; that stretch reads DLITNSYTRGKPRHVTSWRNLKT.

Post-translationally, contains 4 disulfide bonds. In terms of tissue distribution, expressed by the venom duct.

It is found in the secreted. The sequence is that of Conotoxin Cal12.1p4 from Californiconus californicus (California cone).